The primary structure comprises 1132 residues: NUT family member 1 (1132 aa).

Disordered stretches follow at residues 1 to 56, 337 to 365, 383 to 405, 476 to 584, 693 to 714, 873 to 892, and 922 to 1017; these read MASD…SVFS, AASK…EIPP, LATG…EGMY, EEED…VERR, RGTP…GERD, DASS…NSFS, and PLNV…DEEL. Residues 21 to 36 are compositionally biased toward pro residues; that stretch reads APSPSPALPFLPPTSD. The segment covering 337-352 has biased composition (basic residues); it reads AASKTRAPRRRQRKAQ. Over residues 395–404 the composition is skewed to acidic residues; the sequence is EGQQQEEEGM. Polar residues-rich tracts occupy residues 487–497, 697–706, and 883–892; these read SGAQLDSSPSG, MAQSYDQNPS, and EAGSRGNSFS. Positions 932-942 are enriched in basic and acidic residues; the sequence is GEGRVDPDLSK. Residues 950 to 971 are compositionally biased toward polar residues; the sequence is QESQESYTTGTPKATSSHQGLG. Phosphoserine occurs at positions 1026, 1029, and 1031. The tract at residues 1031-1132 is disordered; that stretch reads SPREHPLSPH…GRRKKRRRSQ (102 aa). Glutamine 1046 is subject to N5-methylglutamine. Residues 1123 to 1132 are compositionally biased toward basic residues; that stretch reads GRRKKRRRSQ.

The protein belongs to the NUT family. Post-translationally, methylated at Gln-1046 by N6AMT1. In terms of processing, phosphorylation on Ser-1026, Ser-1029 or Ser-1031 is important for cytoplasmic export. In terms of tissue distribution, specifically expressed in testis.

The protein resides in the cytoplasm. The protein localises to the nucleus. Plays a role in the regulation of proliferation. Regulates TERT expression by modulating SP1 binding to TERT promoter binding sites. The chain is NUT family member 1 from Homo sapiens (Human).